The chain runs to 390 residues: Olfactomedin-like protein 3A (390 aa).

An N-terminal signal peptide occupies residues 1-17; that stretch reads MRALQLLVLVLSGLVGA. Residues 18–91 adopt a coiled-coil conformation; sequence QQQALMDYLE…RVDRVEREMD (74 aa). The Olfactomedin-like domain occupies 130–386; that stretch reads DCSDMISSIK…QILYKLQLKK (257 aa). C131 and C313 are joined by a disulfide. N-linked (GlcNAc...) asparagine glycosylation is present at N169.

The protein belongs to the OLFML3 family.

The protein localises to the secreted. In terms of biological role, secreted scaffold protein that plays an essential role in dorsoventral patterning during early development. Stabilizes axial formation by restricting chordin (CHRD) activity on the dorsal side. Acts by facilitating the association between the tolloid proteases and their substrate chordin (CHRD), leading to enhance chordin (CHRD) degradation. The protein is Olfactomedin-like protein 3A (olfml3a) of Danio rerio (Zebrafish).